Consider the following 434-residue polypeptide: T-box transcription factor T homolog (434 aa).

The T-box DNA-binding region spans 50–220 (LWKKFHKLTN…YNPFAKAFLD (171 aa)). Polar residues-rich tracts occupy residues 355–364 (SGFSHVSSPQ) and 376–385 (HPTSSHQHNL). The interval 355 to 385 (SGFSHVSSPQSPLPTGLFRNPHPTSSHQHNL) is disordered.

As to expression, in the developing embryo, expressed in the mesenchyme founder cells, vegetal plate of the mesenchyme blastula, extending tip of the invaginating archenteron and, later, in the secondary mesenchyme cells.

It is found in the nucleus. Its function is as follows. Involved in the transcriptional regulation of genes required for mesoderm differentiation. This chain is T-box transcription factor T homolog, found in Hemicentrotus pulcherrimus (Sea urchin).